The following is a 1577-amino-acid chain: Dynamin-binding protein (1577 aa).

Met-1 is subject to N-acetylmethionine. 4 consecutive SH3 domains span residues 2 to 61, 66 to 126, 145 to 204, and 243 to 302; these read EAGS…IVTI, EGER…ELCL, YSMG…LLGP, and EPGT…LCPD. 2 disordered regions span residues 211–244 and 335–395; these read SVSS…EEEP and EEQR…WEMP. Acidic residues predominate over residues 230–244; it reads VGEEEIGPDEDEEEP. Residues 335–344 show a composition bias toward basic and acidic residues; the sequence is EEQRHETSDH. Residue Ser-496 is modified to Phosphoserine. 2 disordered regions span residues 591-624 and 639-659; these read GSSK…TSPH and VRPS…NAVS. The segment covering 639–649 has biased composition (pro residues); it reads VRPSRPAPLPP. At Ser-684 the chain carries Phosphoserine. Residues 693-757 adopt a coiled-coil conformation; the sequence is LVLVRIEEME…ELQQLREMTL (65 aa). The DH domain occupies 784–967; the sequence is KRAKVIEELL…KEINVNINEY (184 aa). Residues 1008–1217 form the BAR domain; the sequence is LKHLTGFAPQ…LKVAGREGNL (210 aa). The stretch at 1136 to 1173 forms a coiled coil; sequence ERAEKLKDKKTLEELQSARNNYEALNAQLLDELPKFHQ. The region spanning 1285 to 1348 is the SH3 5 domain; sequence PPEKLFQAER…YSSFLKPYNP (64 aa). The interval 1348 to 1487 is disordered; sequence PRRSHSDASV…SVPGRNGQSQ (140 aa). Polar residues predominate over residues 1376 to 1405; the sequence is RQNSGSTLTFNPSSMAVSFTSGSCQKQPQD. A compositionally biased stretch (low complexity) spans 1419–1442; sequence SASLNPSNSESSPSRCPSDPDSTS. An SH3 6 domain is found at 1513-1576; the sequence is EGNQVYFAVY…PSNYIRKTEY (64 aa).

As to quaternary structure, binds DNM1 via its N-terminal SH3 domains. The C-terminal SH3 domain binds a complex containing actin, tubulin, Hsp70 and actin-regulatory proteins, such as ENAH, EVL, WIRE, CR16, WAVE1 and NAP1L1. Interacts with FASLG. Interacts (via SH3 domain 6) with WASL. Interacts (via SH3 domain 6) interacts with ENAH. Interacts (via C-terminal domain) with TJP1; required for the apical cell-cell junction localization of DNMBP. In terms of assembly, (Microbial infection) Interacts (via SH3 domain 6) with L.monocytogenes InlC. As to expression, detected in heart, brain, lung, liver, skeletal muscle, kidney and pancreas.

The protein resides in the cytoplasm. It localises to the golgi apparatus. It is found in the golgi stack. The protein localises to the cytoskeleton. Its subcellular location is the synapse. The protein resides in the cell junction. In terms of biological role, plays a critical role as a guanine nucleotide exchange factor (GEF) for CDC42 in several intracellular processes associated with the actin and microtubule cytoskeleton. Regulates the structure of apical junctions through F-actin organization in epithelial cells. Participates in the normal lumenogenesis of epithelial cell cysts by regulating spindle orientation. Plays a role in ciliogenesis. May play a role in membrane trafficking between the cell surface and the Golgi. The chain is Dynamin-binding protein from Homo sapiens (Human).